We begin with the raw amino-acid sequence, 904 residues long: DNA mismatch repair protein MutS (904 aa).

655–662 (GPNMGGKS) contributes to the ATP binding site.

Belongs to the DNA mismatch repair MutS family.

This protein is involved in the repair of mismatches in DNA. It is possible that it carries out the mismatch recognition step. This protein has a weak ATPase activity. This Rhizorhabdus wittichii (strain DSM 6014 / CCUG 31198 / JCM 15750 / NBRC 105917 / EY 4224 / RW1) (Sphingomonas wittichii) protein is DNA mismatch repair protein MutS.